The sequence spans 240 residues: UDP-2,3-diacylglucosamine hydrolase (240 aa).

Mn(2+) contacts are provided by Asp-8, His-10, Asp-41, Asn-79, and His-114. Position 79 to 80 (79 to 80) interacts with substrate; it reads NR. Residues Asp-122, Ser-160, Thr-164, Lys-167, and His-195 each contribute to the substrate site. Mn(2+)-binding residues include His-195 and His-197.

It belongs to the LpxH family. It depends on Mn(2+) as a cofactor.

It localises to the cell inner membrane. It catalyses the reaction UDP-2-N,3-O-bis[(3R)-3-hydroxytetradecanoyl]-alpha-D-glucosamine + H2O = 2-N,3-O-bis[(3R)-3-hydroxytetradecanoyl]-alpha-D-glucosaminyl 1-phosphate + UMP + 2 H(+). It functions in the pathway glycolipid biosynthesis; lipid IV(A) biosynthesis; lipid IV(A) from (3R)-3-hydroxytetradecanoyl-[acyl-carrier-protein] and UDP-N-acetyl-alpha-D-glucosamine: step 4/6. Hydrolyzes the pyrophosphate bond of UDP-2,3-diacylglucosamine to yield 2,3-diacylglucosamine 1-phosphate (lipid X) and UMP by catalyzing the attack of water at the alpha-P atom. Involved in the biosynthesis of lipid A, a phosphorylated glycolipid that anchors the lipopolysaccharide to the outer membrane of the cell. The sequence is that of UDP-2,3-diacylglucosamine hydrolase from Pseudomonas paraeruginosa (strain DSM 24068 / PA7) (Pseudomonas aeruginosa (strain PA7)).